We begin with the raw amino-acid sequence, 1749 residues long: Transposon Ty1-NL2 Gag-Pol polyprotein (1749 aa).

4 stretches are compositionally biased toward polar residues: residues 1 to 23 (MESQ…SVTS), 48 to 60 (TKAN…TPAS), 71 to 97 (SPQT…NQAN), and 129 to 152 (QFPQ…GNTF). Disordered regions lie at residues 1–97 (MESQ…NQAN), 129–171 (QFPQ…YVRP), and 352–421 (GSRN…SKST). The segment covering 153–165 (TDSSSADSDMTST) has biased composition (low complexity). The interval 299–401 (NNGIHINNKV…NSKSKTARAH (103 aa)) is RNA-binding. Positions 402-418 (NVSTSNNSPSTDNDSIS) are enriched in low complexity. Residue aspartate 461 is the For protease activity; shared with dimeric partner of the active site. The tract at residues 583-640 (NVHTSESTRKYPYPFIHRMLAHANAQTIRYSLKNNTITYFNESDVDWSSAIDYQCPDC) is integrase-type zinc finger-like. Residues 660-835 (NSYEPFQYLH…AGLDISTLLP (176 aa)) enclose the Integrase catalytic domain. Aspartate 671 and aspartate 736 together coordinate Mg(2+). Positions 945–1166 (PRNVLSKAVS…LGGIGDSNAY (222 aa)) are disordered. Positions 954-963 (SPTDSTPPST) are enriched in low complexity. Polar residues predominate over residues 999–1009 (STPQISDIEST). The segment covering 1032-1047 (ESSHTSKSKDFRHSDS) has biased composition (basic and acidic residues). 2 stretches are compositionally biased toward polar residues: residues 1048–1076 (YSDN…QTSE) and 1089–1100 (SIDTSSSESNSL). The Bipartite nuclear localization signal signature appears at 1172 to 1206 (KKRSLEDNETEIKVSRDTWNTKNMRSLEPPRSKKR). The Reverse transcriptase Ty1/copia-type domain maps to 1332–1470 (NNYYITQLDI…DILGLEIKYQ (139 aa)). Mg(2+) is bound by residues aspartate 1340, aspartate 1421, aspartate 1422, aspartate 1604, glutamate 1646, and aspartate 1679. Residues 1604–1746 (DASYGNQPYY…IKTFKLLTNK (143 aa)) form the RNase H Ty1/copia-type domain.

In terms of assembly, the capsid protein forms a homotrimer, from which the VLPs are assembled. The protease is a homodimer, whose active site consists of two apposed aspartic acid residues. In terms of processing, initially, virus-like particles (VLPs) are composed of the structural unprocessed proteins Gag and Gag-Pol, and also contain the host initiator methionine tRNA (tRNA(i)-Met) which serves as a primer for minus-strand DNA synthesis, and a dimer of genomic Ty RNA. Processing of the polyproteins occurs within the particle and proceeds by an ordered pathway, called maturation. First, the protease (PR) is released by autocatalytic cleavage of the Gag-Pol polyprotein yielding capsid protein p45 and a Pol-p154 precursor protein. This cleavage is a prerequisite for subsequent processing of Pol-p154 at the remaining sites to release the mature structural and catalytic proteins. Maturation takes place prior to the RT reaction and is required to produce transposition-competent VLPs.

The protein resides in the cytoplasm. The protein localises to the nucleus. It carries out the reaction DNA(n) + a 2'-deoxyribonucleoside 5'-triphosphate = DNA(n+1) + diphosphate. The enzyme catalyses Endonucleolytic cleavage to 5'-phosphomonoester.. Its function is as follows. Capsid protein (CA) is the structural component of the virus-like particle (VLP), forming the shell that encapsulates the retrotransposons dimeric RNA genome. The particles are assembled from trimer-clustered units and there are holes in the capsid shells that allow for the diffusion of macromolecules. CA also has nucleocapsid-like chaperone activity, promoting primer tRNA(i)-Met annealing to the multipartite primer-binding site (PBS), dimerization of Ty1 RNA and initiation of reverse transcription. In terms of biological role, the aspartyl protease (PR) mediates the proteolytic cleavages of the Gag and Gag-Pol polyproteins after assembly of the VLP. Functionally, reverse transcriptase/ribonuclease H (RT) is a multifunctional enzyme that catalyzes the conversion of the retro-elements RNA genome into dsDNA within the VLP. The enzyme displays a DNA polymerase activity that can copy either DNA or RNA templates, and a ribonuclease H (RNase H) activity that cleaves the RNA strand of RNA-DNA heteroduplexes during plus-strand synthesis and hydrolyzes RNA primers. The conversion leads to a linear dsDNA copy of the retrotransposon that includes long terminal repeats (LTRs) at both ends. Integrase (IN) targets the VLP to the nucleus, where a subparticle preintegration complex (PIC) containing at least integrase and the newly synthesized dsDNA copy of the retrotransposon must transit the nuclear membrane. Once in the nucleus, integrase performs the integration of the dsDNA into the host genome. The sequence is that of Transposon Ty1-NL2 Gag-Pol polyprotein (TY1B-NL2) from Saccharomyces cerevisiae (strain ATCC 204508 / S288c) (Baker's yeast).